Here is a 349-residue protein sequence, read N- to C-terminus: Glucose 1-dehydrogenase 1 (349 aa).

C39 contacts Zn(2+). A substrate-binding site is contributed by T41. Zn(2+) is bound by residues H64 and E65. Substrate contacts are provided by E110 and E146. Residue E146 coordinates Zn(2+). NADP(+)-binding positions include 178–181 (AGPI), 260–262 (LGV), and 289–291 (SVN). Residue N291 participates in substrate binding.

The protein belongs to the zinc-containing alcohol dehydrogenase family. Glucose 1-dehydrogenase subfamily. It depends on Zn(2+) as a cofactor.

The enzyme catalyses D-glucose + NAD(+) = D-glucono-1,5-lactone + NADH + H(+). It catalyses the reaction D-glucose + NADP(+) = D-glucono-1,5-lactone + NADPH + H(+). Functionally, catalyzes the NAD(P)(+)-dependent oxidation of D-glucose to D-gluconate via gluconolactone. Can utilize both NAD(+) and NADP(+) as electron acceptor. Is involved in the degradation of glucose through a non-phosphorylative variant of the Entner-Doudoroff pathway. This Caldivirga maquilingensis (strain ATCC 700844 / DSM 13496 / JCM 10307 / IC-167) protein is Glucose 1-dehydrogenase 1.